The primary structure comprises 1129 residues: ATP-dependent DNA helicase mph1 (1129 aa).

Disordered stretches follow at residues 1-101, 124-222, and 236-306; these read MTGS…FEDA, TQLT…QNEG, and DAFD…TQHK. Over residues 45 to 63 the composition is skewed to basic and acidic residues; sequence DGTASDVRRRPSENRESQR. 2 stretches are compositionally biased toward polar residues: residues 203 to 222 and 242 to 285; these read NTKA…QNEG and ISLS…QTDQ. Over residues 297 to 306 the composition is skewed to basic and acidic residues; it reads QKDEPPTQHK. The region spanning 331-499 is the Helicase ATP-binding domain; it reads IAQKGLFHNL…AVIDGLDIAR (169 aa). 344–351 serves as a coordination point for ATP; it reads LPTGLGKT. Positions 447-450 match the DEAH box motif; sequence DEAH. One can recognise a Helicase C-terminal domain in the interval 674–843; sequence VLNHFMDAGE…GSRFTFHDDI (170 aa). 3 disordered regions span residues 863–930, 1018–1060, and 1072–1129; these read IPDE…VEIP, RQGD…STED, and SVVK…DSDD. Basic residues-rich tracts occupy residues 877-889 and 1028-1044; these read RRGR…PKKF and SPRH…KPRY. The span at 1077-1086 shows a compositional bias: polar residues; it reads QKQQPFYSSQ.

This sequence belongs to the DEAD box helicase family. DEAH subfamily. FANCM sub-subfamily. In terms of assembly, interacts with the MHF histone-fold complex to form the FANCM-MHF complex.

The protein resides in the nucleus. The enzyme catalyses ATP + H2O = ADP + phosphate + H(+). Functionally, ATP-dependent DNA helicase involved in DNA damage repair by homologous recombination and in genome maintenance. Capable of unwinding D-loops. Plays a role in limiting crossover recombinants during mitotic DNA double-strand break (DSB) repair. Component of a FANCM-MHF complex which promotes gene conversion at blocked replication forks, probably by reversal of the stalled fork. This is ATP-dependent DNA helicase mph1 from Aspergillus oryzae (strain ATCC 42149 / RIB 40) (Yellow koji mold).